The sequence spans 562 residues: Bifunctional coenzyme A synthase (562 aa).

2 positions are modified to phosphoserine: S177 and S182. A phosphopantetheine adenylyltransferase region spans residues V179–C357. Residues V359 to P562 form the DPCK domain. G364–S371 is an ATP binding site.

The protein in the central section; belongs to the eukaryotic CoaD family. As to quaternary structure, monomer. Post-translationally, the N-terminus is blocked.

It is found in the cytoplasm. It localises to the mitochondrion matrix. It catalyses the reaction (R)-4'-phosphopantetheine + ATP + H(+) = 3'-dephospho-CoA + diphosphate. The catalysed reaction is 3'-dephospho-CoA + ATP = ADP + CoA + H(+). It functions in the pathway cofactor biosynthesis; coenzyme A biosynthesis; CoA from (R)-pantothenate: step 4/5. Its pathway is cofactor biosynthesis; coenzyme A biosynthesis; CoA from (R)-pantothenate: step 5/5. In terms of biological role, bifunctional enzyme that catalyzes the fourth and fifth sequential steps of CoA biosynthetic pathway. The fourth reaction is catalyzed by the phosphopantetheine adenylyltransferase, coded by the coaD domain; the fifth reaction is catalyzed by the dephospho-CoA kinase, coded by the coaE domain. May act as a point of CoA biosynthesis regulation. The protein is Bifunctional coenzyme A synthase of Sus scrofa (Pig).